Consider the following 166-residue polypeptide: uncharacterized protein (166 aa).

The helical transmembrane segment at 34–54 (FWGKVLVLTFGIICVVFVIFM) threads the bilayer. Disordered stretches follow at residues 73-93 (QRTQ…SQQF) and 123-166 (TSTP…NDEV).

Its subcellular location is the vacuole membrane. This is an uncharacterized protein from Schizosaccharomyces pombe (strain 972 / ATCC 24843) (Fission yeast).